Here is a 368-residue protein sequence, read N- to C-terminus: 4-hydroxy-3-methylbut-2-en-1-yl diphosphate synthase (flavodoxin) (368 aa).

Residues cysteine 268, cysteine 271, cysteine 303, and glutamate 310 each coordinate [4Fe-4S] cluster.

This sequence belongs to the IspG family. [4Fe-4S] cluster serves as cofactor.

It carries out the reaction (2E)-4-hydroxy-3-methylbut-2-enyl diphosphate + oxidized [flavodoxin] + H2O + 2 H(+) = 2-C-methyl-D-erythritol 2,4-cyclic diphosphate + reduced [flavodoxin]. The protein operates within isoprenoid biosynthesis; isopentenyl diphosphate biosynthesis via DXP pathway; isopentenyl diphosphate from 1-deoxy-D-xylulose 5-phosphate: step 5/6. In terms of biological role, converts 2C-methyl-D-erythritol 2,4-cyclodiphosphate (ME-2,4cPP) into 1-hydroxy-2-methyl-2-(E)-butenyl 4-diphosphate. This is 4-hydroxy-3-methylbut-2-en-1-yl diphosphate synthase (flavodoxin) from Listeria monocytogenes serovar 1/2a (strain ATCC BAA-679 / EGD-e).